We begin with the raw amino-acid sequence, 143 residues long: MDKLSRPEIRQQTTQQMYDVPENILEIDVINPQTHGIGRNMFTTYEIVCRTNMPYFRLHNSSVRRRYSEFEKFHDMLERESGRVSIPPLPGKIFTQRFRDDVIEERRQGLENFLRLVAGHPLIQTHSRVLSSFLQSPEFKPTP.

The PX domain occupies 23–140; the sequence is NILEIDVINP…SSFLQSPEFK (118 aa). Arg-66, Ser-68, Lys-92, Arg-97, and Arg-106 together coordinate a 1,2-diacyl-sn-glycero-3-phospho-(1D-myo-inositol-3-phosphate).

This sequence belongs to the sorting nexin family.

The protein localises to the cytoplasm. It is found in the golgi apparatus membrane. Its subcellular location is the prevacuolar compartment membrane. Required for retention of late Golgi membrane proteins. Component of the retrieval machinery that functions by direct interaction with the cytosolic tails of certain TGN membrane proteins during the sorting/budding process at the prevacuolar compartment. Binds phosphatidylinositol 3-phosphate (PtdIns(P3)). This is Sorting nexin-3 (snx3) from Schizosaccharomyces pombe (strain 972 / ATCC 24843) (Fission yeast).